Consider the following 434-residue polypeptide: Oxysterol-binding protein homolog 4 (434 aa).

The tract at residues 7 to 29 (SSSWTSFLKSIASFNGDLSSLSA) is ALPS motif. Residues 16-366 (SIASFNGDLS…WQRRWFKDFD (351 aa)) are OSBP-related domain (ORD). 24–29 (LSSLSA) contributes to the a 1,2-diacyl-sn-glycero-3-phospho-(1D-myo-inositol 4-phosphate) binding site. Glutamine 96 lines the 20-hydroxycholesterol pocket. Glutamine 96 provides a ligand contact to 25-hydroxycholesterol. 7beta-hydroxycholesterol-binding residues include glutamine 96 and arginine 100. A cholesterol-binding site is contributed by glutamine 96. Ergosterol is bound at residue glutamine 96. A 1,2-diacyl-sn-glycero-3-phospho-(1D-myo-inositol 4-phosphate) contacts are provided by residues 109–112 (KPLN), 143–144 (HH), lysine 336, glutamate 340, and arginine 344. Threonine 370 carries the phosphothreonine modification. Serine 389 carries the post-translational modification Phosphoserine.

The protein belongs to the OSBP family.

The protein resides in the cytoplasm. Its subcellular location is the golgi apparatus membrane. Its function is as follows. Lipid transport protein (LTP) involved in non-vesicular transfer of lipids between membranes. Functions in phosphoinositide-coupled directional transport of various lipids by carrying the lipid molecule in a hydrophobic pocket and transferring it between membranes through the cytosol. Involved in maintenance of intracellular sterol distribution and homeostasis. Involved in lipid countertransport between the Golgi complex and membranes of the endoplasmic reticulum. Specifically exchanges sterol with phosphatidylinositol 4-phosphate (PI4P), delivering sterol to the Golgi in exchange for PI4P, which is delivered to the ER-localized PI4P phosphatase SAC1 for degradation. Thus, by maintaining a PI4P gradient at the ER/Golgi interface, SAC1 may drive PS transport. Displays a similar affinity for PI4P and sterols. Binds sterol and PI4P in a mutually exclusive manner. Involved in ergosterol transport from the plasma membrane (PM) to the ER. Mediates sterol transport from the ER to mitochondria. Involved in the negative regulation of Golgi-derived transport vesicle biogenesis. Plays a role in the positive regulation of vesicular transport of ceramide from the ER to the Golgi, negatively regulating COPII-mediated ER export of cargos. This chain is Oxysterol-binding protein homolog 4, found in Saccharomyces cerevisiae (strain ATCC 204508 / S288c) (Baker's yeast).